The following is a 680-amino-acid chain: SH3 domain-binding protein 1 (680 aa).

The segment covering 1 to 11 (MMKRQLHRMRQ) has biased composition (basic residues). 2 disordered regions span residues 1-24 (MMKRQLHRMRQLAHTGSSGRTPET) and 160-184 (SQAAKNSGSNQGLGGASGSHTHTTT). An interaction with CGNL1 region spans residues 1 to 275 (MMKRQLHRMR…TAAPFSRVYG (275 aa)). In terms of domain architecture, BAR spans 81 to 262 (MAESFKELDP…RDNHSQADHS (182 aa)). Over residues 160–169 (SQAAKNSGSN) the composition is skewed to polar residues. S241 and S262 each carry phosphoserine. The Rho-GAP domain maps to 276–469 (VSLRTHLQDL…ALIQNADTLF (194 aa)). An interaction with CD2AP region spans residues 470-680 (PGDINFNVSG…RPRGLISETE (211 aa)). Positions 488–680 (EKVSSQQVSE…RPRGLISETE (193 aa)) are disordered. Over residues 502-516 (VTVPAPATTPAPTPA) the composition is skewed to pro residues. S535 is modified (phosphoserine). Residues 536–546 (PKVSRNPTETA) show a composition bias toward polar residues. Positions 561 to 571 (PARPTMPPPQP) are enriched in pro residues. Residue S582 is modified to Phosphoserine. T592 carries the phosphothreonine modification. An SH3-binding motif is present at residues 607–616 (APTMPPPLPP). The segment covering 609-621 (TMPPPLPPVPPQP) has biased composition (pro residues). S632 is modified (phosphoserine). A compositionally biased stretch (pro residues) spans 660–671 (HPPPPALPPQPR).

In terms of assembly, interacts with RAC1. Interacts with the exocyst via EXOC4 and EXOC8; required for the localization of both SH3BP1 and the exocyst to the leading edge of migrating cells. Interacts with CD2AP and CGNL1; probably part of a complex at cell junctions. Interacts with CAPZA1; recruits CAPZA1 to forming cell junctions. May interact with AFDN. Interacts with PLXND1; they dissociate upon SEMA3E binding to PLXND1 allowing SH3BP1 to transduce downstream signal through RAC1 inactivation. Interacts with ABL1, GRB2 and SRC (via SH3 domain). Expressed in all tissues examined. Highest levels found in spleen and brain, lowest in heart and liver.

The protein localises to the cell projection. Its subcellular location is the cell junction. The protein resides in the tight junction. It is found in the adherens junction. It localises to the phagocytic cup. The protein localises to the nucleus. Its subcellular location is the cytoplasm. The protein resides in the cytosol. In terms of biological role, GTPase activating protein (GAP) which specifically converts GTP-bound Rho-type GTPases including RAC1 and CDC42 in their inactive GDP-bound form. By specifically inactivating RAC1 at the leading edge of migrating cells, it regulates the spatiotemporal organization of cell protrusions which is important for proper cell migration. Also negatively regulates CDC42 in the process of actin remodeling and the formation of epithelial cell junctions. Through its GAP activity toward RAC1 and/or CDC42 plays a specific role in phagocytosis of large particles. Specifically recruited by a PI3 kinase/PI3K-dependent mechanism to sites of large particles engagement, inactivates RAC1 and/or CDC42 allowing the reorganization of the underlying actin cytoskeleton required for engulfment. It also plays a role in angiogenesis and the process of repulsive guidance as part of a semaphorin-plexin signaling pathway. Following the binding of PLXND1 to extracellular SEMA3E it dissociates from PLXND1 and inactivates RAC1, inducing the intracellular reorganization of the actin cytoskeleton and the collapse of cells. The sequence is that of SH3 domain-binding protein 1 from Mus musculus (Mouse).